The following is a 152-amino-acid chain: MQLTELIETTVTGLGYELVDLERTGRGMLCIYIDQPAGISLDDCEKVTRQLQHVLTVENIDYERLEVSSPGLDRPLKKLADFERFAGSEVSVTLKKPLDGRKTYRGILHAPNGETIGLEFERNKGEAAMLDFTLADIDKARLIPQVDFRSRK.

Belongs to the RimP family.

The protein resides in the cytoplasm. Functionally, required for maturation of 30S ribosomal subunits. This Burkholderia vietnamiensis (strain G4 / LMG 22486) (Burkholderia cepacia (strain R1808)) protein is Ribosome maturation factor RimP.